The sequence spans 296 residues: Large ribosomal subunit protein uL18A (296 aa).

A disordered region spans residues 251-296 (PVHEKKPKKEVKKKRWNRAKLSLEQKKDRVAQKKASFLRAQEKADS). Over residues 255–268 (KKPKKEVKKKRWNR) the composition is skewed to basic residues. The span at 271 to 281 (LSLEQKKDRVA) shows a compositional bias: basic and acidic residues.

The protein belongs to the universal ribosomal protein uL18 family. In terms of assembly, component of the large ribosomal subunit (LSU). Part of a LSU subcomplex, the 5S RNP which is composed of the 5S RNA, RPL5 and RPL11.

The protein localises to the cytoplasm. It is found in the nucleus. The protein resides in the nucleolus. In terms of biological role, component of the ribosome, a large ribonucleoprotein complex responsible for the synthesis of proteins in the cell. The small ribosomal subunit (SSU) binds messenger RNAs (mRNAs) and translates the encoded message by selecting cognate aminoacyl-transfer RNA (tRNA) molecules. The large subunit (LSU) contains the ribosomal catalytic site termed the peptidyl transferase center (PTC), which catalyzes the formation of peptide bonds, thereby polymerizing the amino acids delivered by tRNAs into a polypeptide chain. The nascent polypeptides leave the ribosome through a tunnel in the LSU and interact with protein factors that function in enzymatic processing, targeting, and the membrane insertion of nascent chains at the exit of the ribosomal tunnel. As part of the 5S RNP/5S ribonucleoprotein particle it is an essential component of the LSU, required for its formation and the maturation of rRNAs. It also couples ribosome biogenesis to p53/TP53 activation. As part of the 5S RNP it accumulates in the nucleoplasm and inhibits MDM2, when ribosome biogenesis is perturbed, mediating the stabilization and the activation of TP53. This chain is Large ribosomal subunit protein uL18A (rpl5-a), found in Xenopus laevis (African clawed frog).